An 875-amino-acid polypeptide reads, in one-letter code: DNA gyrase subunit A (875 aa).

A Topo IIA-type catalytic domain is found at 34-533 (LPDVRDGLKP…NSADINLEDL (500 aa)). Residue Y122 is the O-(5'-phospho-DNA)-tyrosine intermediate of the active site. The GyrA-box motif lies at 560–566 (QRRGGKG). The tract at residues 841 to 875 (EPVDEEDLDTIDGSAAEGDDEIAPEVDVDDEPEEE) is disordered. Acidic residues predominate over residues 857–875 (EGDDEIAPEVDVDDEPEEE).

It belongs to the type II topoisomerase GyrA/ParC subunit family. Heterotetramer, composed of two GyrA and two GyrB chains. In the heterotetramer, GyrA contains the active site tyrosine that forms a transient covalent intermediate with DNA, while GyrB binds cofactors and catalyzes ATP hydrolysis.

It is found in the cytoplasm. It catalyses the reaction ATP-dependent breakage, passage and rejoining of double-stranded DNA.. Functionally, a type II topoisomerase that negatively supercoils closed circular double-stranded (ds) DNA in an ATP-dependent manner to modulate DNA topology and maintain chromosomes in an underwound state. Negative supercoiling favors strand separation, and DNA replication, transcription, recombination and repair, all of which involve strand separation. Also able to catalyze the interconversion of other topological isomers of dsDNA rings, including catenanes and knotted rings. Type II topoisomerases break and join 2 DNA strands simultaneously in an ATP-dependent manner. The sequence is that of DNA gyrase subunit A from Shigella flexneri.